The sequence spans 466 residues: Cysteine--tRNA ligase (466 aa).

Cysteine 29 contacts Zn(2+). The short motif at 31–41 (PTVYNYIHIGN) is the 'HIGH' region element. Residues cysteine 209, histidine 234, and glutamate 238 each contribute to the Zn(2+) site. Residues 266 to 270 (KMSKS) carry the 'KMSKS' region motif. Lysine 269 is an ATP binding site. At serine 270 the chain carries Phosphoserine.

This sequence belongs to the class-I aminoacyl-tRNA synthetase family. In terms of assembly, monomer. Zn(2+) is required as a cofactor.

It localises to the cytoplasm. It carries out the reaction tRNA(Cys) + L-cysteine + ATP = L-cysteinyl-tRNA(Cys) + AMP + diphosphate. The chain is Cysteine--tRNA ligase (cysS) from Halalkalibacterium halodurans (strain ATCC BAA-125 / DSM 18197 / FERM 7344 / JCM 9153 / C-125) (Bacillus halodurans).